The following is a 497-amino-acid chain: Serine/arginine-rich protein PSR (497 aa).

An N-terminal signal peptide occupies residues 1–19 (MYSRCIALVFVGLLASSLA). The Extracellular portion of the chain corresponds to 20–366 (ANCYGPAGKL…HHGLSSQKLG (347 aa)). N92, N193, N202, N261, and N283 each carry an N-linked (GlcNAc...) asparagine glycan. Residues 367–387 (LAIGLPIAGVFLIILIAAAII) form a helical membrane-spanning segment. Residues 388–497 (YYRKRRESEK…ESASRDSDSD (110 aa)) lie on the Cytoplasmic side of the membrane. A necessary for phosphorylation by PSRPK in vitro region spans residues 424–450 (MGSKTMQAMLDMRDDDESEHDSDDGYG). Positions 436-447 (RDDDESEHDSDD) are enriched in acidic residues. The interval 436-497 (RDDDESEHDS…ESASRDSDSD (62 aa)) is disordered. Residues 459-471 (GRSRSRSRSRSVS) show a composition bias toward basic residues. Residues 476–497 (GSRDARSESDPGESASRDSDSD) are compositionally biased toward basic and acidic residues.

In terms of processing, phosphorylated on serine residues in the RS domain by PSRPK.

Its subcellular location is the membrane. This chain is Serine/arginine-rich protein PSR, found in Physarum polycephalum (Slime mold).